The sequence spans 651 residues: Receptor-like serine/threonine-protein kinase At4g25390 (651 aa).

A signal peptide spans 1-25 (MPSRSISAPVPVLAPAPIVSSLVPA). Residues 26–40 (APSGHQNKTTRIFPP) lie on the Extracellular side of the membrane. Asn-32 is a glycosylation site (N-linked (GlcNAc...) asparagine). The chain crosses the membrane as a helical span at residues 41–61 (FVVAGAGAGFSLFITLSVCFC). Residues 62 to 651 (KFSRKRSSPP…PLKTTRKQRR (590 aa)) are Cytoplasmic-facing. A disordered region spans residues 66–87 (KRSSPPAENASSSPRRPSPREF). Residues 69–87 (SPPAENASSSPRRPSPREF) are compositionally biased toward low complexity. Residues 99 to 633 (FSQANRLGQG…LKGEVNLPEL (535 aa)) form the Protein kinase domain. ATP is bound by residues 105–113 (LGQGGFGVV) and Lys-127. Asp-225 functions as the Proton acceptor in the catalytic mechanism.

It belongs to the protein kinase superfamily. Ser/Thr protein kinase family.

It is found in the cell membrane. It carries out the reaction L-seryl-[protein] + ATP = O-phospho-L-seryl-[protein] + ADP + H(+). It catalyses the reaction L-threonyl-[protein] + ATP = O-phospho-L-threonyl-[protein] + ADP + H(+). In Arabidopsis thaliana (Mouse-ear cress), this protein is Receptor-like serine/threonine-protein kinase At4g25390.